A 263-amino-acid chain; its full sequence is Proteasome subunit alpha type-1 (263 aa).

The residue at position 1 (Met1) is an N-acetylmethionine. Position 110 is a phosphoserine; alternate (Ser110). Residue Ser110 is glycosylated (O-linked (GlcNAc) serine; alternate). A Glycyl lysine isopeptide (Lys-Gly) (interchain with G-Cter in ubiquitin) cross-link involves residue Lys115. Ser177 is modified (phosphoserine). Lys208 is covalently cross-linked (Glycyl lysine isopeptide (Lys-Gly) (interchain with G-Cter in ubiquitin)). The interval 232–263 is disordered; the sequence is FLDGLEERPQRKAQPSQAADEPAEKADEPMEH. Residues 253–263 show a composition bias toward basic and acidic residues; that stretch reads PAEKADEPMEH.

It belongs to the peptidase T1A family. As to quaternary structure, the 26S proteasome consists of a 20S proteasome core and two 19S regulatory subunits. The 20S proteasome core is a barrel-shaped complex made of 28 subunits that are arranged in four stacked rings. The two outer rings are each formed by seven alpha subunits, and the two inner rings are formed by seven beta subunits. The proteolytic activity is exerted by three beta-subunits PSMB5, PSMB6 and PSMB7. Interacts with NOTCH3. Interacts with ZFAND1. Post-translationally, proteolytically cleaved from a C-terminal extension in the course of the conversion of the proteasome from its latent form into its active form. Ubiquitous.

The protein resides in the cytoplasm. Its subcellular location is the nucleus. Its function is as follows. Component of the 20S core proteasome complex involved in the proteolytic degradation of most intracellular proteins. This complex plays numerous essential roles within the cell by associating with different regulatory particles. Associated with two 19S regulatory particles, forms the 26S proteasome and thus participates in the ATP-dependent degradation of ubiquitinated proteins. The 26S proteasome plays a key role in the maintenance of protein homeostasis by removing misfolded or damaged proteins that could impair cellular functions, and by removing proteins whose functions are no longer required. Associated with the PA200 or PA28, the 20S proteasome mediates ubiquitin-independent protein degradation. This type of proteolysis is required in several pathways including spermatogenesis (20S-PA200 complex) or generation of a subset of MHC class I-presented antigenic peptides (20S-PA28 complex). This Rattus norvegicus (Rat) protein is Proteasome subunit alpha type-1 (Psma1).